Reading from the N-terminus, the 127-residue chain is Large ribosomal subunit protein bL20 (127 aa).

The protein belongs to the bacterial ribosomal protein bL20 family.

In terms of biological role, binds directly to 23S ribosomal RNA and is necessary for the in vitro assembly process of the 50S ribosomal subunit. It is not involved in the protein synthesizing functions of that subunit. This is Large ribosomal subunit protein bL20 (rplT) from Streptomyces coelicolor (strain ATCC BAA-471 / A3(2) / M145).